The sequence spans 491 residues: MNQVFKGWSRGMSTSRGRSMRSKVESRMRKESGKTLREIRRAKKLKKKLMTDEERLIYNLKRAKKKVALLLQKLKKYDLPELPSPVHDPELFTSEQVQAFKKIGFKNKNYVPVGVRGVFGGVVQNMHMHWKFHETVQVCCDNFPKEKIKEMASMIARLSGGVVINIHNVKTIIMFRGRNYRQPKNLIPVNTLTKRKALFKARFEQALESQKLNIKKTEQQLRRMGVNPEDPVAMASIHRVASTFFNAIDKKEGTPYVFHGDKQSERGTSVDNREESEPGDEDSDQEELDRFIAEIEEAADKEWEEEEAAEQEESGRIRYWNREEFAGRSRTPELRSYGDASHGFRRNDRDTHSQRRPNDSDDDDDDGELDSEDDEIPKRFDRARSSNTNTRRPREDFKRRSPDPRPRPRAQVRSDDDVLSDLDNTMWDSEDEEDAPPANYISSSDDDEDENRTVSASSSKQSRFRNNSSRDGINNSKSKSGKQRDEDWDSD.

Residues 1-25 (MNQVFKGWSRGMSTSRGRSMRSKVE) constitute a mitochondrion transit peptide. Residues 1 to 34 (MNQVFKGWSRGMSTSRGRSMRSKVESRMRKESGK) are disordered. Positions 22–34 (SKVESRMRKESGK) are enriched in basic and acidic residues. The region spanning 90 to 187 (ELFTSEQVQA…RNYRQPKNLI (98 aa)) is the CRM domain. Basic and acidic residues predominate over residues 255-265 (PYVFHGDKQSE). Disordered regions lie at residues 255–287 (PYVF…DQEE) and 328–491 (RSRT…WDSD). Over residues 277 to 287 (EPGDEDSDQEE) the composition is skewed to acidic residues. Positions 345 to 359 (RRNDRDTHSQRRPND) are enriched in basic and acidic residues. Over residues 360–375 (SDDDDDDGELDSEDDE) the composition is skewed to acidic residues. The span at 392-416 (RPREDFKRRSPDPRPRPRAQVRSDD) shows a compositional bias: basic and acidic residues. Over residues 453–478 (TVSASSSKQSRFRNNSSRDGINNSKS) the composition is skewed to polar residues.

In terms of tissue distribution, highly expressed in roots and meristemic regions of young seedlings. Expressed at low levels in stems, trichomes and stigma.

It localises to the mitochondrion. Functionally, involved in the splicing of group II introns in mitochondria. Required for the splicing of mitochondrial introns found in nad1, nad2, nad4, nad5, nad7, rps3 and cox2 genes. Splicing of mitochondrial introns is crucial for mitochondrial biogenesis and function, plant growth and development, and plant response to abiotic stresses. In Arabidopsis thaliana (Mouse-ear cress), this protein is CRM-domain containing factor CFM9, mitochondrial.